The chain runs to 130 residues: MKDWLDEIHWNSDGLVPAIAQDRKTGRVLMMAWMNREALSLTASENRAIYWSRSRGKLWRKGEESGHVQKLHELRLDCDADVIILMVEQIGGIACHTGRESCFYRVYEQSGWKTVDPVLKDPDAIYPAGH.

Residue aspartate 77 coordinates Mg(2+). Cysteine 78 contributes to the Zn(2+) binding site. The Mg(2+) site is built by aspartate 79 and aspartate 81. Zn(2+)-binding residues include cysteine 95 and cysteine 102.

Belongs to the PRA-CH family. Homodimer. Mg(2+) serves as cofactor. It depends on Zn(2+) as a cofactor.

The protein resides in the cytoplasm. The enzyme catalyses 1-(5-phospho-beta-D-ribosyl)-5'-AMP + H2O = 1-(5-phospho-beta-D-ribosyl)-5-[(5-phospho-beta-D-ribosylamino)methylideneamino]imidazole-4-carboxamide. The protein operates within amino-acid biosynthesis; L-histidine biosynthesis; L-histidine from 5-phospho-alpha-D-ribose 1-diphosphate: step 3/9. Its function is as follows. Catalyzes the hydrolysis of the adenine ring of phosphoribosyl-AMP. This Pseudomonas syringae pv. tomato (strain ATCC BAA-871 / DC3000) protein is Phosphoribosyl-AMP cyclohydrolase.